The chain runs to 296 residues: MLYQQIASNKRKTVVLLIVFFCLLAAIGAAVGYLVLGSYQFGLVLALIIGVIYAVSMIFQSTNVVMSMNNAREVTEDEAPNYFHIVEDMAMIAQIPMPRVFIVEDDSLNAFATGSKPENAAVAATTGLLAVMNREELEGVIGHEVSHIRNYDIRISTIAVALASAVTLISSIGSRMLFYGGGRRRDDDREDGGNILVLIFSILSLILAPLAASLVQLAISRQREYLADASSVELTRNPQGMISALEKLDRSEPMGHPVDDASAALYINDPTKKEGLKSLFYTHPPIADRIERLRHM.

A run of 2 helical transmembrane segments spans residues 14–34 and 39–59; these read VVLL…VGYL and YQFG…SMIF. His143 lines the Zn(2+) pocket. Glu144 is an active-site residue. His147 is a Zn(2+) binding site. 2 helical membrane passes run 158 to 178 and 195 to 215; these read IAVA…RMLF and ILVL…ASLV. Glu224 is a binding site for Zn(2+).

This sequence belongs to the peptidase M48B family. Zn(2+) serves as cofactor.

The protein resides in the cell membrane. This Streptococcus agalactiae serotype Ia (strain ATCC 27591 / A909 / CDC SS700) protein is Protease HtpX homolog.